The primary structure comprises 487 residues: Recombining binding protein suppressor of hairless (487 aa).

DNA-binding regions lie at residues 44–54 and 152–157; these read QKSYGNEKRFF and SKPSKK. Lys162 carries the N6-acetyllysine modification. Residues 179-184 form a DNA-binding region; that stretch reads RLRSQT. Positions 342–432 constitute an IPT/TIG domain; that stretch reads PVVESLQLNG…YSTSLTFTYT (91 aa). A compositionally biased stretch (polar residues) spans 452-468; that stretch reads SSQVPPNESNTNSEGSY. A disordered region spans residues 452–487; sequence SSQVPPNESNTNSEGSYTNVSTNSTSVTSSTATVVS. The span at 469 to 487 shows a compositional bias: low complexity; that stretch reads TNVSTNSTSVTSSTATVVS.

Belongs to the Su(H) family. As to quaternary structure, interacts with activated NOTCH1, NOTCH2 or NOTCH3. Interacts with MINT/SHARP. This interaction may mediate the recruitment of large corepressor complexes containing proteins such as HDAC1, HDAC2, NCOR2, SAP30, FHL1/KYOT2 and CIR1. Interacts with EP300, MAML1 and PTF1A. Interacts with RITA1, leading to nuclear export, prevent the interaction between RBPJ and NICD product and subsequent down-regulation of the Notch signaling pathway. Interacts with SNW1. Interacts with CHCHD2 and CXXC5. Interacts with BEND6 (via BEN domain). Interacts with NKAPL. Interacts with ZMIZ1. Interacts with RBM15. Interacts with L3MBTL3 and KDM1A; the interaction with KDM1A is weaker in the absence of L3MBTL3 and the interaction with L3MBTL3 is impaired by Notch-derived peptides containing the intracellular domain (NICD).

It localises to the nucleus. The protein localises to the cytoplasm. In terms of biological role, transcriptional regulator that plays a central role in Notch signaling, a signaling pathway involved in cell-cell communication that regulates a broad spectrum of cell-fate determinations. Acts as a transcriptional repressor when it is not associated with Notch proteins. When associated with some NICD product of Notch proteins (Notch intracellular domain), it acts as a transcriptional activator that activates transcription of Notch target genes. Probably represses or activates transcription via the recruitment of chromatin remodeling complexes containing histone deacetylase or histone acetylase proteins, respectively. Specifically binds to the immunoglobulin kappa-type J segment recombination signal sequence. Binds specifically to methylated DNA. Binds to the oxygen responsive element of COX4I2 and activates its transcription under hypoxia conditions (4% oxygen). Negatively regulates the phagocyte oxidative burst in response to bacterial infection by repressing transcription of NADPH oxidase subunits. This chain is Recombining binding protein suppressor of hairless (RBPJ), found in Bos taurus (Bovine).